The sequence spans 106 residues: MSQFTRISIQQAAALLQLPSVCLADIRDPSSFNAAHVTGAFHLTNDTLPQFTQQITKETPVLVMCYHGNSSQGVANYLTSIGYEKVYSIDGGFEGWRHVYPYTATV.

Residues 17–105 form the Rhodanese domain; it reads QLPSVCLADI…WRHVYPYTAT (89 aa). The active-site Cysteine persulfide intermediate is Cys65.

This sequence belongs to the GlpE family.

It is found in the cytoplasm. It catalyses the reaction thiosulfate + hydrogen cyanide = thiocyanate + sulfite + 2 H(+). It carries out the reaction thiosulfate + [thioredoxin]-dithiol = [thioredoxin]-disulfide + hydrogen sulfide + sulfite + 2 H(+). Functionally, transferase that catalyzes the transfer of sulfur from thiosulfate to thiophilic acceptors such as cyanide or dithiols. May function in a CysM-independent thiosulfate assimilation pathway by catalyzing the conversion of thiosulfate to sulfite, which can then be used for L-cysteine biosynthesis. The polypeptide is Thiosulfate sulfurtransferase GlpE (Tolumonas auensis (strain DSM 9187 / NBRC 110442 / TA 4)).